Here is a 413-residue protein sequence, read N- to C-terminus: Putative tRNA pseudouridine synthase C16C4.06c (413 aa).

Catalysis depends on Asp-96, which acts as the Nucleophile. Tyr-154 provides a ligand contact to substrate.

Belongs to the tRNA pseudouridine synthase TruA family.

It is found in the cytoplasm. It localises to the nucleus. The enzyme catalyses a uridine in tRNA = a pseudouridine in tRNA. The protein is Putative tRNA pseudouridine synthase C16C4.06c of Schizosaccharomyces pombe (strain 972 / ATCC 24843) (Fission yeast).